The primary structure comprises 132 residues: Arginine decarboxylase proenzyme (132 aa).

Serine 70 (schiff-base intermediate with substrate; via pyruvic acid) is an active-site residue. Position 70 is a pyruvic acid (Ser); by autocatalysis (serine 70). The active-site Proton acceptor; for processing activity is the histidine 75. Cysteine 90 (proton donor; for catalytic activity) is an active-site residue.

The protein belongs to the prokaryotic AdoMetDC family. Type 1 subfamily. As to quaternary structure, heterooctamer of four alpha and four beta chains arranged as a tetramer of alpha/beta heterodimers. Requires pyruvate as cofactor. Post-translationally, is synthesized initially as an inactive proenzyme. Formation of the active enzyme involves a self-maturation process in which the active site pyruvoyl group is generated from an internal serine residue via an autocatalytic post-translational modification. Two non-identical subunits are generated from the proenzyme in this reaction, and the pyruvate is formed at the N-terminus of the alpha chain, which is derived from the carboxyl end of the proenzyme. The post-translation cleavage follows an unusual pathway, termed non-hydrolytic serinolysis, in which the side chain hydroxyl group of the serine supplies its oxygen atom to form the C-terminus of the beta chain, while the remainder of the serine residue undergoes an oxidative deamination to produce ammonia and the pyruvoyl group blocking the N-terminus of the alpha chain.

It carries out the reaction L-arginine + H(+) = agmatine + CO2. The protein operates within amine and polyamine biosynthesis; agmatine biosynthesis; agmatine from L-arginine: step 1/1. Its function is as follows. Specifically catalyzes the decarboxylation of L-arginine to agmatine. Has no S-adenosylmethionine decarboxylase (AdoMetDC) activity. The sequence is that of Arginine decarboxylase proenzyme from Aeropyrum pernix (strain ATCC 700893 / DSM 11879 / JCM 9820 / NBRC 100138 / K1).